The sequence spans 629 residues: Dolichyl-diphosphooligosaccharide--protein glycosyltransferase subunit 2 (629 aa).

The signal sequence occupies residues 1 to 22; it reads MAPPGSRTVLLLALTIIARTQA. Residues 23–541 lie on the Lumenal side of the membrane; it reads LKPTHYLTKH…RDPEKRPPTV (519 aa). Residue N106 is glycosylated (N-linked (GlcNAc...) asparagine). Residue K154 forms a Glycyl lysine isopeptide (Lys-Gly) (interchain with G-Cter in ubiquitin) linkage. Residues 542 to 562 form a helical membrane-spanning segment; it reads VSNTFTGLILSPLLLLFALWI. The Cytoplasmic portion of the chain corresponds to 563–570; that stretch reads RIGAKISN. Residues 571-591 traverse the membrane as a helical segment; that stretch reads FTFGLTIIFHLGHAMLAMYVY. Over 592-594 the chain is Lumenal; the sequence is WTQ. Residues 595 to 615 traverse the membrane as a helical segment; sequence LNMFQTLKYLAILGSVTFLAG. Over 616 to 629 the chain is Cytoplasmic; it reads NRMLAQQAIKRTAH.

Belongs to the SWP1 family. As to quaternary structure, component of the oligosaccharyltransferase (OST) complex. OST exists in two different complex forms which contain common core subunits RPN1, RPN2, OST48, OST4, DAD1 and TMEM258, either STT3A or STT3B as catalytic subunits, and form-specific accessory subunits. STT3A complex assembly occurs through the formation of 3 subcomplexes. Subcomplex 1 contains RPN1 and TMEM258, subcomplex 2 contains the STT3A-specific subunits STT3A, DC2/OSTC, and KCP2 as well as the core subunit OST4, and subcomplex 3 contains RPN2, DAD1, and OST48. The STT3A complex can form stable complexes with the Sec61 complex or with both the Sec61 and TRAP complexes. Interacts with DDI2. Interacts with TMEM35A/NACHO.

The protein localises to the endoplasmic reticulum. Its subcellular location is the endoplasmic reticulum membrane. It participates in protein modification; protein glycosylation. In terms of biological role, subunit of the oligosaccharyl transferase (OST) complex that catalyzes the initial transfer of a defined glycan (Glc(3)Man(9)GlcNAc(2) in eukaryotes) from the lipid carrier dolichol-pyrophosphate to an asparagine residue within an Asn-X-Ser/Thr consensus motif in nascent polypeptide chains, the first step in protein N-glycosylation. N-glycosylation occurs cotranslationally and the complex associates with the Sec61 complex at the channel-forming translocon complex that mediates protein translocation across the endoplasmic reticulum (ER). All subunits are required for a maximal enzyme activity. This Sus scrofa (Pig) protein is Dolichyl-diphosphooligosaccharide--protein glycosyltransferase subunit 2.